We begin with the raw amino-acid sequence, 298 residues long: Bifunctional protein FolD (298 aa).

NADP(+) is bound by residues 166–168 (GRS), Ser-191, and Ile-232.

Belongs to the tetrahydrofolate dehydrogenase/cyclohydrolase family. Homodimer.

It carries out the reaction (6R)-5,10-methylene-5,6,7,8-tetrahydrofolate + NADP(+) = (6R)-5,10-methenyltetrahydrofolate + NADPH. The catalysed reaction is (6R)-5,10-methenyltetrahydrofolate + H2O = (6R)-10-formyltetrahydrofolate + H(+). It participates in one-carbon metabolism; tetrahydrofolate interconversion. Catalyzes the oxidation of 5,10-methylenetetrahydrofolate to 5,10-methenyltetrahydrofolate and then the hydrolysis of 5,10-methenyltetrahydrofolate to 10-formyltetrahydrofolate. This Parvibaculum lavamentivorans (strain DS-1 / DSM 13023 / NCIMB 13966) protein is Bifunctional protein FolD.